The chain runs to 382 residues: MSNATNNTLGSLLPQLEAAANSNSLYGGMVPNLRFNITMIVIWGILLTIHVVQLLMRQYWFSIAFICTGILEVLGFIGRTWSHSNVADMDAFLLNMICLTIAPVFTMGGIYYQLAKLIEVYGHRFSLLPSPMAYSFIFICSDIVSLVVQAVGGGLCGVAVTDGTSTTTGNHVFIAGLAIQVASMAIFLMLWFHFLFRIYISVRWEHINSRPISLSLLKISQTEVDYLYREKFHFLRLEPKRWVFHYFNLAITVAVLTIFTRCCYRLAELVVGWDGYLITHEWYFIILDALMMAIATVTLTIFHPGFAFKGKSTSIPITPGHVDPETLPHTDDVEDILDTSDSKQFDIEKEEFQASMKYPISTFKQFMSKIANLFSSKKKAKL.

Over 1-34 the chain is Extracellular; sequence MSNATNNTLGSLLPQLEAAANSNSLYGGMVPNLR. N3 and N6 each carry an N-linked (GlcNAc...) asparagine glycan. A helical transmembrane segment spans residues 35-55; the sequence is FNITMIVIWGILLTIHVVQLL. Over 56 to 57 the chain is Cytoplasmic; that stretch reads MR. The helical transmembrane segment at 58–78 threads the bilayer; the sequence is QYWFSIAFICTGILEVLGFIG. At 79–90 the chain is on the extracellular side; the sequence is RTWSHSNVADMD. The helical transmembrane segment at 91 to 111 threads the bilayer; that stretch reads AFLLNMICLTIAPVFTMGGIY. Residues 112–135 lie on the Cytoplasmic side of the membrane; sequence YQLAKLIEVYGHRFSLLPSPMAYS. A helical membrane pass occupies residues 136-156; the sequence is FIFICSDIVSLVVQAVGGGLC. At 157–171 the chain is on the extracellular side; the sequence is GVAVTDGTSTTTGNH. The chain crosses the membrane as a helical span at residues 172 to 192; it reads VFIAGLAIQVASMAIFLMLWF. At 193–241 the chain is on the cytoplasmic side; sequence HFLFRIYISVRWEHINSRPISLSLLKISQTEVDYLYREKFHFLRLEPKR. The helical transmembrane segment at 242–262 threads the bilayer; sequence WVFHYFNLAITVAVLTIFTRC. Residues 263 to 281 lie on the Extracellular side of the membrane; sequence CYRLAELVVGWDGYLITHE. A helical membrane pass occupies residues 282–302; sequence WYFIILDALMMAIATVTLTIF. Residues 303 to 382 lie on the Cytoplasmic side of the membrane; the sequence is HPGFAFKGKS…LFSSKKKAKL (80 aa).

This sequence belongs to the lipid-translocating exporter (LTE) (TC 9.A.26.1) family.

Its subcellular location is the cell membrane. Catalyzes the ATP-dependent translocation of sphingoid long-chain bases (LCBs) from the cytoplasmic site toward the extracytoplasmic side of the membrane (flip-flop). Involved in the establishment of the functional lipid asymmetry of the plasma membrane. Regulates intracellular levels of LCBs, sphingolipid precursors that are growth inhibitory at increased levels. This is Sphingoid long-chain base transporter RSB1 (RSB1) from Saccharomyces cerevisiae (strain JAY291) (Baker's yeast).